A 233-amino-acid polypeptide reads, in one-letter code: 5'-methylthioadenosine/S-adenosylhomocysteine nucleosidase (233 aa).

The active-site Proton acceptor is the E12. Substrate contacts are provided by residues G78, I152, and 173 to 174; that span reads ME. The active-site Proton donor is the D197.

Belongs to the PNP/UDP phosphorylase family. MtnN subfamily. In terms of assembly, homodimer.

It catalyses the reaction S-adenosyl-L-homocysteine + H2O = S-(5-deoxy-D-ribos-5-yl)-L-homocysteine + adenine. The enzyme catalyses S-methyl-5'-thioadenosine + H2O = 5-(methylsulfanyl)-D-ribose + adenine. It carries out the reaction 5'-deoxyadenosine + H2O = 5-deoxy-D-ribose + adenine. It functions in the pathway amino-acid biosynthesis; L-methionine biosynthesis via salvage pathway; S-methyl-5-thio-alpha-D-ribose 1-phosphate from S-methyl-5'-thioadenosine (hydrolase route): step 1/2. Functionally, catalyzes the irreversible cleavage of the glycosidic bond in both 5'-methylthioadenosine (MTA) and S-adenosylhomocysteine (SAH/AdoHcy) to adenine and the corresponding thioribose, 5'-methylthioribose and S-ribosylhomocysteine, respectively. Also cleaves 5'-deoxyadenosine, a toxic by-product of radical S-adenosylmethionine (SAM) enzymes, into 5-deoxyribose and adenine. Thus, is required for in vivo function of the radical SAM enzymes biotin synthase and lipoic acid synthase, that are inhibited by 5'-deoxyadenosine accumulation. The chain is 5'-methylthioadenosine/S-adenosylhomocysteine nucleosidase from Yersinia pseudotuberculosis serotype O:1b (strain IP 31758).